A 243-amino-acid chain; its full sequence is Sugar fermentation stimulation protein homolog (243 aa).

The protein belongs to the SfsA family.

The chain is Sugar fermentation stimulation protein homolog from Acaryochloris marina (strain MBIC 11017).